Reading from the N-terminus, the 332-residue chain is Probable sugar phosphate/phosphate translocator At1g53660 (332 aa).

The next 10 membrane-spanning stretches (helical) occupy residues 19 to 39 (ASIL…KWVL), 46 to 66 (FPYP…LCFL), 82 to 102 (LEIY…TLWL), 120 to 140 (AIMP…IMSC), 143 to 163 (LLIM…ELNI), 165 to 185 (WVGV…LILM), 199 to 219 (LSLM…PWIF), 233 to 253 (LVLS…FLVI), 259 to 281 (LTIR…LLFA), and 285 to 304 (LTII…ATYN). The segment covering 312–322 (ESITLVSQSPK) has biased composition (polar residues). The segment at 312-332 (ESITLVSQSPKNSDKKPDGPL) is disordered. Basic and acidic residues predominate over residues 323 to 332 (NSDKKPDGPL).

The protein belongs to the TPT transporter family. TPT (TC 2.A.7.9) subfamily.

The protein resides in the membrane. The sequence is that of Probable sugar phosphate/phosphate translocator At1g53660 from Arabidopsis thaliana (Mouse-ear cress).